We begin with the raw amino-acid sequence, 459 residues long: Sorting nexin-8 (459 aa).

The interval 1-37 (MTGRAMDPLPSPAVAAAAEAEADEEADPPATGPRTSQ) is disordered. In terms of domain architecture, PX spans 68 to 176 (AKDTVQVELI…KLFLSFSGSD (109 aa)). A 1,2-diacyl-sn-glycero-3-phospho-(1D-myo-inositol-3-phosphate) contacts are provided by R104, K130, and R143. T446 carries the post-translational modification Phosphothreonine. S450 bears the Phosphoserine mark.

It belongs to the sorting nexin family.

The protein resides in the early endosome membrane. Its function is as follows. May be involved in several stages of intracellular trafficking. May play a role in intracellular protein transport from early endosomes to the trans-Golgi network. The polypeptide is Sorting nexin-8 (Snx8) (Mus musculus (Mouse)).